A 253-amino-acid chain; its full sequence is uncharacterized protein (253 aa).

The protein belongs to the NAD(P)-dependent epimerase/dehydratase family.

This is an uncharacterized protein from Bacillus subtilis (strain 168).